The chain runs to 194 residues: RxLR effector protein Avh240 (194 aa).

Residues 1–23 form the signal peptide; the sequence is MRPYFTLLLALAFILACTNLVEA. Positions 38-57 match the RxLR-dEER motif; the sequence is RHLRTAVASVVDLPDDEDER. Positions 58–108 are host plasma membrane-binding; it reads LLGYNTVQLWRMRRTANKLMNGKLTTQKEAALKKWMASQQDKFLAKWLKSS.

It belongs to the RxLR effector family. As to quaternary structure, homodimer. Interacts with host soybean aspartic protease AP1.

It is found in the secreted. It localises to the host cell membrane. In terms of biological role, effector that suppresses plant defense responses during the early stages of pathogen infection. Suppresses cell death induced by effectors and PAMPs in plant hosts. Avh240 dimerizes and localizes at the plasma membrane to interfere with aspartic protease AP1 secretion, which presents an effective mechanism by which effector proteins suppress plant apoplastic immunity. This Phytophthora sojae (Soybean stem and root rot agent) protein is RxLR effector protein Avh240.